Reading from the N-terminus, the 118-residue chain is Small ribosomal subunit protein uS13 (118 aa).

The disordered stretch occupies residues 94-118; it reads GLPVRGQRTRTNARTRKGPRKAIKK.

It belongs to the universal ribosomal protein uS13 family. In terms of assembly, part of the 30S ribosomal subunit. Forms a loose heterodimer with protein S19. Forms two bridges to the 50S subunit in the 70S ribosome.

Located at the top of the head of the 30S subunit, it contacts several helices of the 16S rRNA. In the 70S ribosome it contacts the 23S rRNA (bridge B1a) and protein L5 of the 50S subunit (bridge B1b), connecting the 2 subunits; these bridges are implicated in subunit movement. Contacts the tRNAs in the A and P-sites. This chain is Small ribosomal subunit protein uS13, found in Thiobacillus denitrificans (strain ATCC 25259 / T1).